A 304-amino-acid chain; its full sequence is Protein PagO (304 aa).

Transmembrane regions (helical) follow at residues 4–24 (VSIS…WLAM), 34–54 (VFAT…IAWL), 67–87 (LFQF…MIYG), 95–115 (LAAI…VLFL), 119–139 (AKLM…GILL), 150–170 (WQGI…YTQC), 180–200 (ITFN…TGWF), 214–234 (ILAT…CYFA), 246–266 (LVFL…YGYA), and 267–287 (ISTH…LTLV). 2 EamA domains span residues 15-139 (LTWG…GILL) and 161-287 (LIHA…LTLV).

This sequence belongs to the EamA transporter family.

The protein resides in the cell membrane. The polypeptide is Protein PagO (pagO) (Salmonella typhimurium (strain LT2 / SGSC1412 / ATCC 700720)).